We begin with the raw amino-acid sequence, 433 residues long: Trigger factor (433 aa).

The PPIase FKBP-type domain occupies 161–246; sequence EDRATIDFTG…LKKVEERELP (86 aa).

Belongs to the FKBP-type PPIase family. Tig subfamily.

It localises to the cytoplasm. It carries out the reaction [protein]-peptidylproline (omega=180) = [protein]-peptidylproline (omega=0). In terms of biological role, involved in protein export. Acts as a chaperone by maintaining the newly synthesized protein in an open conformation. Functions as a peptidyl-prolyl cis-trans isomerase. This Edwardsiella ictaluri (strain 93-146) protein is Trigger factor.